A 248-amino-acid chain; its full sequence is MTRYKAIISYDGSGFYGYQVQPNTRTVQAEIEKALTKMHKGKTVRITASGRTDTGVHAKGQVIHFDSELDITAEKFQKALQVMTPFDISFLTVEEVPDDFHARFGTVGKEYRYVVKRTKIFDPFSRNFALHYPYELDISKMKLASKRLIGEHDFTSFCSARTERDSKVRTLYSIDFYEEDDETLVIAFQGNGFLYNMVRILTGTLLDAGQGRISPDDISEALLARDRQKLISKTAPPQGLYLWRVDYE.

The active-site Nucleophile is D53. Y111 is a binding site for substrate.

This sequence belongs to the tRNA pseudouridine synthase TruA family. In terms of assembly, homodimer.

It catalyses the reaction uridine(38/39/40) in tRNA = pseudouridine(38/39/40) in tRNA. Its function is as follows. Formation of pseudouridine at positions 38, 39 and 40 in the anticodon stem and loop of transfer RNAs. This Listeria monocytogenes serotype 4b (strain CLIP80459) protein is tRNA pseudouridine synthase A.